Reading from the N-terminus, the 460-residue chain is Putative glycoside/cation symporter YagG (460 aa).

Topologically, residues 1 to 9 are cytoplasmic; the sequence is MTQLTMKDK. Helical transmembrane passes span 10 to 30 and 31 to 51; these read IGYG…MFLL and AYFY…LFLV. The Cytoplasmic segment spans residues 52–78; that stretch reads SRVLDAVTDPLMGLLVDRTRTRHGQFR. Residues 79-99 traverse the membrane as a helical segment; the sequence is PFLLWGAIPFGIVCVLTFYTP. The Periplasmic segment spans residues 100–106; that stretch reads DFSAQGK. A helical membrane pass occupies residues 107-127; it reads IIYACVTYILLTLVYTFVNVP. Residues 128 to 150 lie on the Cytoplasmic side of the membrane; it reads YCAMPGVITADPKERHALQSWRF. A helical transmembrane segment spans residues 151–171; the sequence is FLAAAGSLAISGIALPLVSII. Topologically, residues 172–179 are periplasmic; sequence GKGDEQVG. Residues 180-200 traverse the membrane as a helical segment; it reads YFGAMCVLGLSGVVLLYVCFF. Residues 201–262 are Cytoplasmic-facing; it reads TTKERYTFEV…FVKYVMDHPE (62 aa). Residues 263–283 traverse the membrane as a helical segment; it reads LATQFLLYGSLATMFGSLCSS. Topologically, residues 284 to 308 are periplasmic; the sequence is RLLGRFDRVTAFKWIIVAYSLISLL. A helical transmembrane segment spans residues 309–329; the sequence is IFVTPAEHIALIFALNILFLF. Over 330–366 the chain is Cytoplasmic; the sequence is VFNTTTPLQWLMASDVVDYEESRSGRRLDGLVFSTYL. Residues 367-387 form a helical membrane-spanning segment; that stretch reads FSLKIGLAIGGAVVGWILAYV. Residues 388 to 405 lie on the Periplasmic side of the membrane; it reads NYSASSSVQPVEVLTTIK. A helical transmembrane segment spans residues 406–426; it reads ILFCVVPVVLYAGMFIMLSLY. The Cytoplasmic portion of the chain corresponds to 427–460; the sequence is KLTDARVEAISRQLIKHRAAQGEAVPDAATAASH.

This sequence belongs to the sodium:galactoside symporter (TC 2.A.2) family.

Its subcellular location is the cell inner membrane. This Escherichia coli (strain K12) protein is Putative glycoside/cation symporter YagG (yagG).